Reading from the N-terminus, the 588-residue chain is Adenine deaminase (588 aa).

It belongs to the metallo-dependent hydrolases superfamily. Adenine deaminase family. As to quaternary structure, homodimer. Mn(2+) is required as a cofactor.

The enzyme catalyses adenine + H2O + H(+) = hypoxanthine + NH4(+). The polypeptide is Adenine deaminase (Escherichia coli O6:H1 (strain CFT073 / ATCC 700928 / UPEC)).